The sequence spans 396 residues: Acetate kinase (396 aa).

Position 7 (Asn-7) interacts with Mg(2+). ATP is bound at residue Lys-14. Arg-89 serves as a coordination point for substrate. Asp-146 functions as the Proton donor/acceptor in the catalytic mechanism. Residues 206–210 (HLGNG), 280–282 (DLR), and 328–332 (GIGEN) contribute to the ATP site. A Mg(2+)-binding site is contributed by Glu-382.

It belongs to the acetokinase family. In terms of assembly, homodimer. Requires Mg(2+) as cofactor. It depends on Mn(2+) as a cofactor.

It localises to the cytoplasm. The catalysed reaction is acetate + ATP = acetyl phosphate + ADP. It functions in the pathway metabolic intermediate biosynthesis; acetyl-CoA biosynthesis; acetyl-CoA from acetate: step 1/2. In terms of biological role, catalyzes the formation of acetyl phosphate from acetate and ATP. Can also catalyze the reverse reaction. The polypeptide is Acetate kinase (Maridesulfovibrio salexigens (strain ATCC 14822 / DSM 2638 / NCIMB 8403 / VKM B-1763) (Desulfovibrio salexigens)).